The primary structure comprises 141 residues: Nucleoside triphosphatase NudI (141 aa).

Residues 1–141 (MRQRTIVCPL…RHTLALKGLL (141 aa)) form the Nudix hydrolase domain. The short motif at 38 to 59 (GGVEPGERIEEALRREVREELG) is the Nudix box element.

This sequence belongs to the Nudix hydrolase family. NudI subfamily. In terms of assembly, monomer. Mg(2+) serves as cofactor.

It catalyses the reaction a ribonucleoside 5'-triphosphate + H2O = a ribonucleoside 5'-phosphate + diphosphate + H(+). The enzyme catalyses a 2'-deoxyribonucleoside 5'-triphosphate + H2O = a 2'-deoxyribonucleoside 5'-phosphate + diphosphate + H(+). It carries out the reaction dUTP + H2O = dUMP + diphosphate + H(+). The catalysed reaction is dTTP + H2O = dTMP + diphosphate + H(+). It catalyses the reaction dCTP + H2O = dCMP + diphosphate + H(+). Catalyzes the hydrolysis of nucleoside triphosphates, with a preference for pyrimidine deoxynucleoside triphosphates (dUTP, dTTP and dCTP). The polypeptide is Nucleoside triphosphatase NudI (Salmonella schwarzengrund (strain CVM19633)).